Reading from the N-terminus, the 987-residue chain is Mediator of RNA polymerase II transcription subunit 24 (987 aa).

6 short sequence motifs (LXXLL motif) span residues 128–132 (LHWLL), 344–348 (LTPLL), 446–450 (LDLLL), 555–559 (LVALL), 786–790 (LPGLL), and 855–859 (LMRLL). 2 positions are modified to phosphoserine: S860 and S871.

It belongs to the Mediator complex subunit 24 family. In terms of assembly, component of the Mediator complex, which is composed of MED1, MED4, MED6, MED7, MED8, MED9, MED10, MED11, MED12, MED13, MED13L, MED14, MED15, MED16, MED17, MED18, MED19, MED20, MED21, MED22, MED23, MED24, MED25, MED26, MED27, MED29, MED30, MED31, CCNC, CDK8 and CDC2L6/CDK11. The MED12, MED13, CCNC and CDK8 subunits form a distinct module termed the CDK8 module. Mediator containing the CDK8 module is less active than Mediator lacking this module in supporting transcriptional activation. Individual preparations of the Mediator complex lacking one or more distinct subunits have been variously termed ARC, CRSP, DRIP, PC2, SMCC and TRAP. Interacts with AR. Interacts with MED1 and MED10. Expressed in the adrenal gland, brain, epididymis, heart, kidney, liver, ovary, pancreas, prostate, skeletal muscle, small intestine, spleen, stomach, testis and thymus.

The protein localises to the nucleus. Its function is as follows. Component of the Mediator complex, a coactivator involved in the regulated transcription of nearly all RNA polymerase II-dependent genes. Mediator functions as a bridge to convey information from gene-specific regulatory proteins to the basal RNA polymerase II transcription machinery. Mediator is recruited to promoters by direct interactions with regulatory proteins and serves as a scaffold for the assembly of a functional preinitiation complex with RNA polymerase II and the general transcription factors. Required for basal and activator-dependent transcription. This Mus musculus (Mouse) protein is Mediator of RNA polymerase II transcription subunit 24 (Med24).